A 351-amino-acid chain; its full sequence is Magnesium-protoporphyrin IX monomethyl ester [oxidative] cyclase 1 (351 aa).

The protein belongs to the AcsF family. The cofactor is Fe cation.

The enzyme catalyses Mg-protoporphyrin IX 13-monomethyl ester + 3 NADPH + 3 O2 + 2 H(+) = 3,8-divinyl protochlorophyllide a + 3 NADP(+) + 5 H2O. It participates in porphyrin-containing compound metabolism; chlorophyll biosynthesis (light-independent). Functionally, catalyzes the formation of the isocyclic ring in chlorophyll biosynthesis. Mediates the cyclase reaction, which results in the formation of divinylprotochlorophyllide (Pchlide) characteristic of all chlorophylls from magnesium-protoporphyrin IX 13-monomethyl ester (MgPMME). The polypeptide is Magnesium-protoporphyrin IX monomethyl ester [oxidative] cyclase 1 (Nostoc sp. (strain PCC 7120 / SAG 25.82 / UTEX 2576)).